The primary structure comprises 328 residues: Transcription initiation factor IIB 4 (328 aa).

Composition is skewed to basic and acidic residues over residues 1–12 and 21–32; these read MTNQRTTRDGSH and RSRESTDEDHGC. A disordered region spans residues 1-47; sequence MTNQRTTRDGSHGTESVPTQRSRESTDEDHGCPECNGDLVTDEDRGE. The segment at 28 to 58 adopts a TFIIB-type zinc-finger fold; the sequence is EDHGCPECNGDLVTDEDRGETTCGECGLVVE. Zn(2+) is bound by residues C32, C35, C50, and C53. 2 tandem repeats follow at residues 144 to 227 and 238 to 319.

Belongs to the TFIIB family.

Its function is as follows. Stabilizes TBP binding to an archaeal box-A promoter. Also responsible for recruiting RNA polymerase II to the pre-initiation complex (DNA-TBP-TFIIB). This is Transcription initiation factor IIB 4 from Halobacterium salinarum (strain ATCC 700922 / JCM 11081 / NRC-1) (Halobacterium halobium).